Consider the following 477-residue polypeptide: Dihydrolipoyl dehydrogenase 3 (477 aa).

FAD contacts are provided by residues 39–47 (EKGEYGGAC), K56, and A118. C47 and C52 are joined by a disulfide. Residues 186–190 (GAGYI), E209, and 279–282 (AVGR) each bind NAD(+). 2 residues coordinate FAD: D322 and A330. H454 acts as the Proton acceptor in catalysis.

Belongs to the class-I pyridine nucleotide-disulfide oxidoreductase family. Homodimer. FAD serves as cofactor.

The protein localises to the cytoplasm. The enzyme catalyses N(6)-[(R)-dihydrolipoyl]-L-lysyl-[protein] + NAD(+) = N(6)-[(R)-lipoyl]-L-lysyl-[protein] + NADH + H(+). The protein is Dihydrolipoyl dehydrogenase 3 (lpdA3) of Haloarcula marismortui (strain ATCC 43049 / DSM 3752 / JCM 8966 / VKM B-1809) (Halobacterium marismortui).